We begin with the raw amino-acid sequence, 352 residues long: Isopentenyl-diphosphate delta-isomerase (352 aa).

A substrate-binding site is contributed by 6–7; the sequence is RK. FMN-binding positions include 63–65, Ser93, and Asn122; that span reads AMT. 93–95 is a binding site for substrate; the sequence is SQR. Gln160 contributes to the substrate binding site. Glu161 lines the Mg(2+) pocket. FMN is bound by residues Lys192, Thr221, 271-273, and 292-293; these read GIR and SQ.

This sequence belongs to the IPP isomerase type 2 family. Homooctamer. Dimer of tetramers. FMN serves as cofactor. NADPH is required as a cofactor. It depends on Mg(2+) as a cofactor.

It localises to the cytoplasm. The enzyme catalyses isopentenyl diphosphate = dimethylallyl diphosphate. In terms of biological role, involved in the biosynthesis of isoprenoids. Catalyzes the 1,3-allylic rearrangement of the homoallylic substrate isopentenyl (IPP) to its allylic isomer, dimethylallyl diphosphate (DMAPP). The sequence is that of Isopentenyl-diphosphate delta-isomerase from Pyrobaculum arsenaticum (strain DSM 13514 / JCM 11321 / PZ6).